A 554-amino-acid chain; its full sequence is Glucose-6-phosphate isomerase (554 aa).

The active-site Proton donor is the glutamate 358. Residues histidine 389 and lysine 515 contribute to the active site.

This sequence belongs to the GPI family.

It localises to the cytoplasm. It carries out the reaction alpha-D-glucose 6-phosphate = beta-D-fructose 6-phosphate. The protein operates within carbohydrate biosynthesis; gluconeogenesis. It functions in the pathway carbohydrate degradation; glycolysis; D-glyceraldehyde 3-phosphate and glycerone phosphate from D-glucose: step 2/4. Its function is as follows. Catalyzes the reversible isomerization of glucose-6-phosphate to fructose-6-phosphate. The protein is Glucose-6-phosphate isomerase of Mycobacterium leprae (strain Br4923).